A 436-amino-acid polypeptide reads, in one-letter code: RNA-binding motif, single-stranded-interacting protein 3 (436 aa).

The interval 28-56 is disordered; that stretch reads APAPHPMAPPSPSTNSSSNNSSNNSSGEQ. The segment covering 30–39 has biased composition (pro residues); it reads APHPMAPPSP. Residues 40 to 53 show a composition bias toward low complexity; that stretch reads STNSSSNNSSNNSS. RRM domains lie at 60-133 and 139-224; these read TNLY…MAKQ and TNLY…FADG. The segment covering 398–421 has biased composition (polar residues); the sequence is TSPQTVAPSSQDTSGQQQQIAVDT. The segment at 398-436 is disordered; the sequence is TSPQTVAPSSQDTSGQQQQIAVDTSNEHAPAYSYQQSKP.

It is found in the cytoplasm. In terms of biological role, binds poly(A) and poly(U) oligoribonucleotides. This chain is RNA-binding motif, single-stranded-interacting protein 3 (RBMS3), found in Pongo abelii (Sumatran orangutan).